We begin with the raw amino-acid sequence, 298 residues long: tRNA (guanine(9)-N1)-methyltransferase (298 aa).

The segment covering 1 to 10 (MSDTSENSNA) has biased composition (polar residues). The disordered stretch occupies residues 1–44 (MSDTSENSNAEIPADTSDVKDKPKPIVRAPQFPPPPEGISKSQW). One can recognise an SAM-dependent MTase TRM10-type domain in the interval 96-285 (PPKVNLNQSD…SVLPPRKLEV (190 aa)). S-adenosyl-L-methionine is bound by residues 192–193 (LT), G212, 216–220 (DKNRH), C224, L238, and 250–252 (KVL). D216 (proton acceptor) is an active-site residue.

This sequence belongs to the class IV-like SAM-binding methyltransferase superfamily. TRM10 family. As to quaternary structure, monomer.

The protein resides in the cytoplasm. The protein localises to the nucleus. The catalysed reaction is guanosine(9) in tRNA + S-adenosyl-L-methionine = N(1)-methylguanosine(9) in tRNA + S-adenosyl-L-homocysteine + H(+). Functionally, S-adenosyl-L-methionine-dependent guanine N(1)-methyltransferase that catalyzes the formation of N(1)-methylguanine at position 9 (m1G9) in cytoplasmic tRNA. The chain is tRNA (guanine(9)-N1)-methyltransferase from Kluyveromyces lactis (strain ATCC 8585 / CBS 2359 / DSM 70799 / NBRC 1267 / NRRL Y-1140 / WM37) (Yeast).